Consider the following 476-residue polypeptide: Lipase (476 aa).

The first 23 residues, 1 to 23, serve as a signal peptide directing secretion; sequence MGIFDYKNLGTEGSKTLFADAMA. Residue serine 207 is the Charge relay system of the active site. 3 Hemolysin-type calcium-binding repeats span residues 372 to 389, 390 to 407, and 410 to 427; these read IGSD…ADFI, EGGK…HNTF, and SGHF…TDKL. Residues aspartate 437, aspartate 440, and aspartate 448 each coordinate Ca(2+).

It belongs to the AB hydrolase superfamily. Lipase family.

The enzyme catalyses a triacylglycerol + H2O = a diacylglycerol + a fatty acid + H(+). The chain is Lipase from Pseudomonas fluorescens.